We begin with the raw amino-acid sequence, 422 residues long: 5-hydroxytryptamine receptor 1A (422 aa).

Over 1–38 the chain is Extracellular; sequence MDVFSFGQGNNTTASQEPFGTGGNVTSISDVTFSYQVI. N-linked (GlcNAc...) asparagine glycans are attached at residues Asn-10, Asn-11, and Asn-24. A helical transmembrane segment spans residues 39-59; the sequence is TSLLLGTLIFCAVLGNACVVA. The Cytoplasmic segment spans residues 60–73; that stretch reads AIALERSLQNVANY. The helical transmembrane segment at 74-98 threads the bilayer; sequence LIGSLAVTDLMVSVLVLPMAALYQV. Residues 99-107 are Extracellular-facing; that stretch reads LNKWTLGQV. Residues 108-132 traverse the membrane as a helical segment; the sequence is TCDLFIALDVLCCTSSILHLCAIAL. Cys-109 and Cys-187 are oxidised to a cystine. Asp-116 and Cys-120 together coordinate serotonin. The DRY motif; important for ligand-induced conformation changes signature appears at 133–135; sequence DRY. Over 133–152 the chain is Cytoplasmic; the sequence is DRYWAITDPIDYVNKRTPRR. Residues 153 to 174 traverse the membrane as a helical segment; that stretch reads AAALISLTWLIGFLISIPPMLG. Over 175-193 the chain is Extracellular; that stretch reads WRTPEDRSDPDACTISKDH. A helical transmembrane segment spans residues 194–216; that stretch reads GYTIYSTFGAFYIPLLLMLVLYG. At 217–346 the chain is on the cytoplasmic side; the sequence is RIFRAARFRI…LARERKTVKT (130 aa). A disordered region spans residues 235-261; sequence KKGAGTSLGTSSAPPPKKSLNGQPGSG. Residues Lys-345, Thr-346, and Gly-352 each contribute to the 1D-myo-inositol 4-phosphate site. Residues 347-370 form a helical membrane-spanning segment; it reads LGIIMGTFILCWLPFFIVALVLPF. The Extracellular segment spans residues 371–378; sequence CESSCHMP. The chain crosses the membrane as a helical span at residues 379–403; it reads ALLGAIINWLGYSNSLLNPVIYAYF. The short motif at 396 to 400 is the NPxxY motif; important for ligand-induced conformation changes and signaling element; it reads NPVIY. Residues Phe-403, Asn-404, and Lys-405 each coordinate 1D-myo-inositol 4-phosphate. At 404–422 the chain is on the cytoplasmic side; it reads NKDFQNAFKKIIKCKFCRR.

Belongs to the G-protein coupled receptor 1 family. 5-hydroxytryptamine receptor subfamily. HTR1A sub-subfamily. As to quaternary structure, heterodimer; heterodimerizes with GPER1. Interacts with YIF1B. Interacts with GPR39 and GALR1. As to expression, detected in hypothalamus, mesencephalon, amygdala, medulla, thalamus, septum and hippocampus.

The protein localises to the cell membrane. It is found in the cell projection. It localises to the dendrite. With respect to regulation, G-protein coupled receptor activity is regulated by lipids: phosphatidylinositol 4-phosphate increases HTR1A-mediated activity. In terms of biological role, G-protein coupled receptor for 5-hydroxytryptamine (serotonin). Also functions as a receptor for various drugs and psychoactive substances. Ligand binding causes a conformation change that triggers signaling via guanine nucleotide-binding proteins (G proteins) and modulates the activity of downstream effectors, such as adenylate cyclase. HTR1A is coupled to G(i)/G(o) G alpha proteins and mediates inhibitory neurotransmission: signaling inhibits adenylate cyclase activity and activates a phosphatidylinositol-calcium second messenger system that regulates the release of Ca(2+) ions from intracellular stores. Beta-arrestin family members regulate signaling by mediating both receptor desensitization and resensitization processes. The polypeptide is 5-hydroxytryptamine receptor 1A (Rattus norvegicus (Rat)).